Reading from the N-terminus, the 481-residue chain is Glutamate--tRNA ligase (481 aa).

The 'HIGH' region signature appears at 9-19; that stretch reads PSPTGNLHIGT. The 'KMSKS' region motif lies at 249-253; sequence KLSKR. ATP is bound at residue K252.

This sequence belongs to the class-I aminoacyl-tRNA synthetase family. Glutamate--tRNA ligase type 1 subfamily. Monomer.

It is found in the cytoplasm. It catalyses the reaction tRNA(Glu) + L-glutamate + ATP = L-glutamyl-tRNA(Glu) + AMP + diphosphate. In terms of biological role, catalyzes the attachment of glutamate to tRNA(Glu) in a two-step reaction: glutamate is first activated by ATP to form Glu-AMP and then transferred to the acceptor end of tRNA(Glu). The sequence is that of Glutamate--tRNA ligase from Picosynechococcus sp. (strain ATCC 27264 / PCC 7002 / PR-6) (Agmenellum quadruplicatum).